We begin with the raw amino-acid sequence, 255 residues long: 4-hydroxy-tetrahydrodipicolinate reductase (255 aa).

NAD(+) contacts are provided by residues 9-14 (GFKGRM), 89-91 (GTT), and 115-118 (APNF). The Proton donor/acceptor role is filled by H145. (S)-2,3,4,5-tetrahydrodipicolinate is bound at residue H146. K149 acts as the Proton donor in catalysis. Residue 155-156 (GT) participates in (S)-2,3,4,5-tetrahydrodipicolinate binding.

The protein belongs to the DapB family.

It localises to the cytoplasm. The catalysed reaction is (S)-2,3,4,5-tetrahydrodipicolinate + NAD(+) + H2O = (2S,4S)-4-hydroxy-2,3,4,5-tetrahydrodipicolinate + NADH + H(+). It catalyses the reaction (S)-2,3,4,5-tetrahydrodipicolinate + NADP(+) + H2O = (2S,4S)-4-hydroxy-2,3,4,5-tetrahydrodipicolinate + NADPH + H(+). Its pathway is amino-acid biosynthesis; L-lysine biosynthesis via DAP pathway; (S)-tetrahydrodipicolinate from L-aspartate: step 4/4. Its function is as follows. Catalyzes the conversion of 4-hydroxy-tetrahydrodipicolinate (HTPA) to tetrahydrodipicolinate. This is 4-hydroxy-tetrahydrodipicolinate reductase from Streptococcus mutans serotype c (strain ATCC 700610 / UA159).